A 105-amino-acid polypeptide reads, in one-letter code: UPF0235 protein Mchl_2407 (105 aa).

This sequence belongs to the UPF0235 family.

The chain is UPF0235 protein Mchl_2407 from Methylorubrum extorquens (strain CM4 / NCIMB 13688) (Methylobacterium extorquens).